A 285-amino-acid polypeptide reads, in one-letter code: Shikimate dehydrogenase (NADP(+)) (285 aa).

Shikimate-binding positions include 19–21 (SLS) and Thr-66. Lys-70 acts as the Proton acceptor in catalysis. The shikimate site is built by Asn-91 and Asp-107. Residues 129–133 (GSGGA) and Leu-228 contribute to the NADP(+) site. Tyr-230 is a shikimate binding site. Gly-251 lines the NADP(+) pocket.

This sequence belongs to the shikimate dehydrogenase family. As to quaternary structure, homodimer.

The enzyme catalyses shikimate + NADP(+) = 3-dehydroshikimate + NADPH + H(+). It participates in metabolic intermediate biosynthesis; chorismate biosynthesis; chorismate from D-erythrose 4-phosphate and phosphoenolpyruvate: step 4/7. Functionally, involved in the biosynthesis of the chorismate, which leads to the biosynthesis of aromatic amino acids. Catalyzes the reversible NADPH linked reduction of 3-dehydroshikimate (DHSA) to yield shikimate (SA). This Prochlorococcus marinus subsp. pastoris (strain CCMP1986 / NIES-2087 / MED4) protein is Shikimate dehydrogenase (NADP(+)).